The following is a 170-amino-acid chain: Myosin regulatory light chain 1 (170 aa).

A compositionally biased stretch (basic residues) spans 1 to 13 (MSKAAKKKSSKKR). The disordered stretch occupies residues 1 to 22 (MSKAAKKKSSKKRSGSEAAQFD). EF-hand domains follow at residues 24–59 (KTIQ…MGQI) and 93–128 (DPEA…KRGE). Ca(2+) is bound by residues Asp37, Asn39, Asp41, and Asp48.

As to quaternary structure, myosin is a hexamer of 2 heavy chains and 4 light chains (two regulatory light chains and two essential light chains).

The chain is Myosin regulatory light chain 1 (mlc-1) from Caenorhabditis elegans.